A 213-amino-acid chain; its full sequence is Type II restriction enzyme BamHI (213 aa).

Positions 77, 94, 111, and 112 each coordinate Mg(2+). Glu113 serves as the catalytic Proton acceptor.

Homodimer. The cofactor is Mg(2+).

The catalysed reaction is Endonucleolytic cleavage of DNA to give specific double-stranded fragments with terminal 5'-phosphates.. Functionally, a P subtype restriction enzyme that recognizes the double-stranded sequence 5'-GGATCC-3' and cleaves after G-1. This Bacillus amyloliquefaciens (Bacillus velezensis) protein is Type II restriction enzyme BamHI.